Consider the following 121-residue polypeptide: Somatostatin-1 (121 aa).

Residues 1 to 24 (MKMVSSSRLRCLLVLLLSLTASIS) form the signal peptide. A propeptide spanning residues 25 to 105 (CSFAGQRDSK…SGGPLLAPRE (81 aa)) is cleaved from the precursor. The interval 76–99 (NFPLAEGGPEDAHADLERAASGGP) is disordered. The cysteines at positions 110 and 121 are disulfide-linked.

The protein belongs to the somatostatin family.

Its subcellular location is the secreted. In terms of biological role, somatostatin inhibits the release of somatotropin. This Lophius americanus (American angler) protein is Somatostatin-1 (sst1).